The primary structure comprises 307 residues: Glycine--tRNA ligase alpha subunit (307 aa).

Belongs to the class-II aminoacyl-tRNA synthetase family. In terms of assembly, tetramer of two alpha and two beta subunits.

It localises to the cytoplasm. The enzyme catalyses tRNA(Gly) + glycine + ATP = glycyl-tRNA(Gly) + AMP + diphosphate. The polypeptide is Glycine--tRNA ligase alpha subunit (Xylella fastidiosa (strain M23)).